Here is a 229-residue protein sequence, read N- to C-terminus: Cytochrome c oxidase subunit 2 (229 aa).

The Mitochondrial intermembrane portion of the chain corresponds to 1–26; the sequence is MSTWANLGLQDSASPLMEQLIFFHDH. Residues 27-48 traverse the membrane as a helical segment; the sequence is ALLILVMITVLVGYLMFMLFFN. The Mitochondrial matrix segment spans residues 49 to 62; that stretch reads SYVNRFLLHGQLIE. Residues 63–82 form a helical membrane-spanning segment; sequence MIWTILPAIILLFIAMPSLR. Over 83–229 the chain is Mitochondrial intermembrane; that stretch reads LLYLLDEINE…IKWISNSVNS (147 aa). Cu cation-binding residues include His161, Cys196, Glu198, Cys200, His204, and Met207. Glu198 serves as a coordination point for Mg(2+).

This sequence belongs to the cytochrome c oxidase subunit 2 family. Component of the cytochrome c oxidase (complex IV, CIV), a multisubunit enzyme composed of a catalytic core of 3 subunits and several supernumerary subunits. The complex exists as a monomer or a dimer and forms supercomplexes (SCs) in the inner mitochondrial membrane with ubiquinol-cytochrome c oxidoreductase (cytochrome b-c1 complex, complex III, CIII). Cu cation is required as a cofactor.

The protein localises to the mitochondrion inner membrane. The enzyme catalyses 4 Fe(II)-[cytochrome c] + O2 + 8 H(+)(in) = 4 Fe(III)-[cytochrome c] + 2 H2O + 4 H(+)(out). Functionally, component of the cytochrome c oxidase, the last enzyme in the mitochondrial electron transport chain which drives oxidative phosphorylation. The respiratory chain contains 3 multisubunit complexes succinate dehydrogenase (complex II, CII), ubiquinol-cytochrome c oxidoreductase (cytochrome b-c1 complex, complex III, CIII) and cytochrome c oxidase (complex IV, CIV), that cooperate to transfer electrons derived from NADH and succinate to molecular oxygen, creating an electrochemical gradient over the inner membrane that drives transmembrane transport and the ATP synthase. Cytochrome c oxidase is the component of the respiratory chain that catalyzes the reduction of oxygen to water. Electrons originating from reduced cytochrome c in the intermembrane space (IMS) are transferred via the dinuclear copper A center (CU(A)) of subunit 2 and heme A of subunit 1 to the active site in subunit 1, a binuclear center (BNC) formed by heme A3 and copper B (CU(B)). The BNC reduces molecular oxygen to 2 water molecules using 4 electrons from cytochrome c in the IMS and 4 protons from the mitochondrial matrix. In Drosophila miranda (Fruit fly), this protein is Cytochrome c oxidase subunit 2 (mt:CoII).